Here is a 172-residue protein sequence, read N- to C-terminus: Keratin-associated protein 13-3 (172 aa).

5 consecutive repeat copies span residues Cys46–Gly55, Cys56–Ser65, Cys66–Pro75, Cys76–Thr85, and Cys92–Gly101. The interval Cys46–Gly101 is 5 X 10 AA approximate repeats.

This sequence belongs to the PMG family. As to quaternary structure, interacts with hair keratins.

Its function is as follows. In the hair cortex, hair keratin intermediate filaments are embedded in an interfilamentous matrix, consisting of hair keratin-associated proteins (KRTAP), which are essential for the formation of a rigid and resistant hair shaft through their extensive disulfide bond cross-linking with abundant cysteine residues of hair keratins. The matrix proteins include the high-sulfur and high-glycine-tyrosine keratins. In Homo sapiens (Human), this protein is Keratin-associated protein 13-3 (KRTAP13-3).